Here is a 580-residue protein sequence, read N- to C-terminus: Glutamine--tRNA ligase (580 aa).

Residues 41-51 (PEPNGYLHIGH) carry the 'HIGH' region motif. ATP contacts are provided by residues 42 to 44 (EPN) and 48 to 54 (HIGHAKA). L-glutamine is bound by residues aspartate 74 and tyrosine 218. Residues threonine 237, 285-286 (RL), and 293-295 (MSK) contribute to the ATP site. The short motif at 292–296 (VMSKR) is the 'KMSKS' region element.

It belongs to the class-I aminoacyl-tRNA synthetase family. As to quaternary structure, monomer.

The protein localises to the cytoplasm. The catalysed reaction is tRNA(Gln) + L-glutamine + ATP = L-glutaminyl-tRNA(Gln) + AMP + diphosphate. The polypeptide is Glutamine--tRNA ligase (Xylella fastidiosa (strain 9a5c)).